The chain runs to 413 residues: Protein CDKN2AIP homolog B (413 aa).

Positions 21–118 constitute an XRN2-binding (XTBD) domain; that stretch reads LERVRGQCES…TTRDELVAKV (98 aa). The tract at residues 118 to 266 is disordered; it reads VKKRGNSSSN…PTRRFTTEHT (149 aa). Residues 183-193 are compositionally biased toward basic and acidic residues; the sequence is NKREAHSRTDV.

Belongs to the CARF family.

It is found in the nucleus. Its subcellular location is the nucleoplasm. Its function is as follows. May regulate DNA damage response and cell proliferation. The polypeptide is Protein CDKN2AIP homolog B (cdkn2aip-b) (Xenopus laevis (African clawed frog)).